The chain runs to 117 residues: Large ribosomal subunit protein uL22 (117 aa).

It belongs to the universal ribosomal protein uL22 family. As to quaternary structure, part of the 50S ribosomal subunit.

This protein binds specifically to 23S rRNA; its binding is stimulated by other ribosomal proteins, e.g. L4, L17, and L20. It is important during the early stages of 50S assembly. It makes multiple contacts with different domains of the 23S rRNA in the assembled 50S subunit and ribosome. Functionally, the globular domain of the protein is located near the polypeptide exit tunnel on the outside of the subunit, while an extended beta-hairpin is found that lines the wall of the exit tunnel in the center of the 70S ribosome. This Lactobacillus delbrueckii subsp. bulgaricus (strain ATCC 11842 / DSM 20081 / BCRC 10696 / JCM 1002 / NBRC 13953 / NCIMB 11778 / NCTC 12712 / WDCM 00102 / Lb 14) protein is Large ribosomal subunit protein uL22.